We begin with the raw amino-acid sequence, 322 residues long: uncharacterized protein (322 aa).

2 stretches are compositionally biased toward basic residues: residues 1–16 and 43–61; these read MPGN…KSGT and LRPH…RRPV. The interval 1–69 is disordered; sequence MPGNSRRRGA…PVKRADETET (69 aa). Gly-261, Ile-281, and Leu-290 together coordinate S-adenosyl-L-methionine.

The protein belongs to the class IV-like SAM-binding methyltransferase superfamily. RNA methyltransferase TrmH family.

This is an uncharacterized protein from Mycobacterium bovis (strain BCG / Pasteur 1173P2).